Reading from the N-terminus, the 914-residue chain is Valine--tRNA ligase (914 aa).

Positions 47 to 57 (PYPTGELHMGH) match the 'HIGH' region motif. The short motif at 552–556 (KMSKS) is the 'KMSKS' region element. Residue lysine 555 coordinates ATP.

This sequence belongs to the class-I aminoacyl-tRNA synthetase family. ValS type 2 subfamily.

The protein resides in the cytoplasm. The catalysed reaction is tRNA(Val) + L-valine + ATP = L-valyl-tRNA(Val) + AMP + diphosphate. Functionally, catalyzes the attachment of valine to tRNA(Val). As ValRS can inadvertently accommodate and process structurally similar amino acids such as threonine, to avoid such errors, it has a 'posttransfer' editing activity that hydrolyzes mischarged Thr-tRNA(Val) in a tRNA-dependent manner. The sequence is that of Valine--tRNA ligase from Methanopyrus kandleri (strain AV19 / DSM 6324 / JCM 9639 / NBRC 100938).